Consider the following 568-residue polypeptide: Small ribosomal subunit protein bS1 (568 aa).

S1 motif domains lie at lysine 39–glutamate 100, glycine 118–arginine 184, glycine 205–lysine 273, glycine 290–lysine 360, glycine 377–lysine 447, and glycine 464–lysine 533.

It belongs to the bacterial ribosomal protein bS1 family.

In terms of biological role, binds mRNA; thus facilitating recognition of the initiation point. It is needed to translate mRNA with a short Shine-Dalgarno (SD) purine-rich sequence. This chain is Small ribosomal subunit protein bS1 (rpsA), found in Rickettsia conorii (strain ATCC VR-613 / Malish 7).